The primary structure comprises 184 residues: Large ribosomal subunit protein uL22 (184 aa).

It belongs to the universal ribosomal protein uL22 family.

The protein is Large ribosomal subunit protein uL22 (RPL17) of Yarrowia lipolytica (strain CLIB 122 / E 150) (Yeast).